A 1044-amino-acid chain; its full sequence is Phosphatidylinositol 4,5-bisphosphate 3-kinase catalytic subunit delta isoform (1044 aa).

The 90-residue stretch at 16 to 105 (ENQSVVVDFL…LPVLRLVARE (90 aa)) folds into the PI3K-ABD domain. The 92-residue stretch at 187-278 (NRALLVNVKF…GLTPHLTMVH (92 aa)) folds into the PI3K-RBD domain. The disordered stretch occupies residues 287–312 (DEQSNPAPQVQKPRAKPPPIPAKKPS). Positions 319 to 476 (LEQPFRIELI…SAAALLICLP (158 aa)) constitute a C2 PI3K-type domain. One can recognise a PIK helical domain in the interval 497–674 (HSECVHVTEE…GLILEAYCRG (178 aa)). At Tyr-524 the chain carries Phosphotyrosine. The PI3K/PI4K catalytic domain occupies 745–1027 (CVEQCTFMDS…KFNEALRESW (283 aa)). The tract at residues 751 to 757 (FMDSKMK) is G-loop. Residues 890 to 898 (GIGDRHSDN) are catalytic loop. An activation loop region spans residues 909–935 (HIDFGHFLGNFKTKFGINRERVPFILT). Ser-1039 carries the post-translational modification Phosphoserine; by autocatalysis.

This sequence belongs to the PI3/PI4-kinase family. Heterodimer of a catalytic subunit PIK3CD and a p85 regulatory subunit (PIK3R1, PIK3R2 or PIK3R3). Interacts with ERAS. Interacts with HRAS. Autophosphorylation on Ser-1039 results in the almost complete inactivation of the lipid kinase activity. In terms of tissue distribution, in humans, the highest levels of expression are seen in peripheral blood mononuclear cells, spleen, and thymus, and low levels of expression in testes, uterus, colon, and small intestine but not in other tissues examined including prostate, heart, brain, and liver. Isoform 2 is expressed in normal thymus, lung and spleen tissues, and is detected at low levels in normal lysates from colon and ovarian biopsies, at elevated levels in lysates from colorectal tumors and is abundantly expressed in some ovarian tumors (at protein level). Both isoform 1 and isoform 2 are widely expressed. Isoform 1 is expressed predominantly in leukocytes.

The protein resides in the cytoplasm. The enzyme catalyses a 1,2-diacyl-sn-glycero-3-phospho-(1D-myo-inositol-4,5-bisphosphate) + ATP = a 1,2-diacyl-sn-glycero-3-phospho-(1D-myo-inositol-3,4,5-trisphosphate) + ADP + H(+). It carries out the reaction a 1,2-diacyl-sn-glycero-3-phospho-(1D-myo-inositol) + ATP = a 1,2-diacyl-sn-glycero-3-phospho-(1D-myo-inositol-3-phosphate) + ADP + H(+). It catalyses the reaction 1-octadecanoyl-2-(5Z,8Z,11Z,14Z)-eicosatetraenoyl-sn-glycero-3-phospho-1D-myo-inositol 4,5-bisphosphate + ATP = 1-octadecanoyl-2-(5Z,8Z,11Z,14Z-eicosatetraenoyl)-sn-glycero-3-phospho-(1D-myo-inositol 3,4,5-triphosphate) + ADP + H(+). It functions in the pathway phospholipid metabolism; phosphatidylinositol phosphate biosynthesis. With respect to regulation, activated by growth factors and cytokine receptors through a tyrosine-kinase-dependent mechanism. Activated by RAS. IC87114 inhibits lipid kinase activity and is selective in cells at doses up to 5-10 uM. IC87114 blocks T-cell receptor signaling in naive and memory T-cells and reduces cytokine production by memory T-cells. Phosphoinositide-3-kinase (PI3K) phosphorylates phosphatidylinositol (PI) and its phosphorylated derivatives at position 3 of the inositol ring to produce 3-phosphoinositides. Uses ATP and PtdIns(4,5)P2 (phosphatidylinositol 4,5-bisphosphate) to generate phosphatidylinositol 3,4,5-trisphosphate (PIP3). PIP3 plays a key role by recruiting PH domain-containing proteins to the membrane, including AKT1 and PDPK1, activating signaling cascades involved in cell growth, survival, proliferation, motility and morphology. Mediates immune responses. Plays a role in B-cell development, proliferation, migration, and function. Required for B-cell receptor (BCR) signaling. Mediates B-cell proliferation response to anti-IgM, anti-CD40 and IL4 stimulation. Promotes cytokine production in response to TLR4 and TLR9. Required for antibody class switch mediated by TLR9. Involved in the antigen presentation function of B-cells. Involved in B-cell chemotaxis in response to CXCL13 and sphingosine 1-phosphate (S1P). Required for proliferation, signaling and cytokine production of naive, effector and memory T-cells. Required for T-cell receptor (TCR) signaling. Mediates TCR signaling events at the immune synapse. Activation by TCR leads to antigen-dependent memory T-cell migration and retention to antigenic tissues. Together with PIK3CG participates in T-cell development. Contributes to T-helper cell expansion and differentiation. Required for T-cell migration mediated by homing receptors SELL/CD62L, CCR7 and S1PR1 and antigen dependent recruitment of T-cells. Together with PIK3CG is involved in natural killer (NK) cell development and migration towards the sites of inflammation. Participates in NK cell receptor activation. Plays a role in NK cell maturation and cytokine production. Together with PIK3CG is involved in neutrophil chemotaxis and extravasation. Together with PIK3CG participates in neutrophil respiratory burst. Plays important roles in mast-cell development and mast cell mediated allergic response. Involved in stem cell factor (SCF)-mediated proliferation, adhesion and migration. Required for allergen-IgE-induced degranulation and cytokine release. The lipid kinase activity is required for its biological function. Isoform 2 may be involved in stabilizing total RAS levels, resulting in increased ERK phosphorylation and increased PI3K activity. The protein is Phosphatidylinositol 4,5-bisphosphate 3-kinase catalytic subunit delta isoform (PIK3CD) of Homo sapiens (Human).